A 638-amino-acid chain; its full sequence is Growth hormone receptor (638 aa).

A signal peptide spans 1–18 (MDLWQLLLTLALAGSSDA). At 19 to 264 (FSGSEATAAI…SQFTCEEDFY (246 aa)) the chain is on the extracellular side. An N-linked (GlcNAc...) asparagine glycan is attached at Asn-46. 2 disulfide bridges follow: Cys-56/Cys-66 and Cys-101/Cys-112. The N-linked (GlcNAc...) asparagine glycan is linked to Asn-115. Cys-126 and Cys-140 form a disulfide bridge. Residues 151–254 (PPIALNWTLL…EVLYVTLPQM (104 aa)) form the Fibronectin type-III domain. 3 N-linked (GlcNAc...) asparagine glycosylation sites follow: Asn-156, Asn-161, and Asn-200. A WSXWS motif motif is present at residues 240 to 244 (YGEFS). The interval 260-262 (EED) is required for ADAM17-mediated proteolysis. Residues 265–288 (FPWLLIIIFGIFGLTVMLFVFLFS) traverse the membrane as a helical segment. Over 289-638 (KQQRIKMLIL…STDQLNKIMP (350 aa)) the chain is Cytoplasmic. Residues 294 to 379 (KMLILPPVPV…HEKSHSNLGV (86 aa)) form a required for JAK2 binding region. Positions 297–305 (ILPPVPVPK) match the Box 1 motif motif. Residues 340–349 (DSWVEFIELD) carry the UbE motif motif. Phosphoserine is present on Ser-341. A disordered region spans residues 353–391 (PDEKTEESDTDRLLSSDHEKSHSNLGVKDGDSGRTSCCE). The segment covering 362–384 (TDRLLSSDHEKSHSNLGVKDGDS) has biased composition (basic and acidic residues). 2 positions are modified to phosphotyrosine; by JAK2: Tyr-487 and Tyr-595.

This sequence belongs to the type I cytokine receptor family. Type 1 subfamily. As to quaternary structure, on growth hormone (GH) binding, forms homodimers and binds JAK2 via a box 1-containing domain. The soluble form (GHBP) is produced by phorbol ester-promoted proteolytic cleavage at the cell surface (shedding) by ADAM17/TACE. Shedding is inhibited by growth hormone (GH) binding to the receptor probably due to a conformational change in GHR rendering the receptor inaccessible to ADAM17. In terms of processing, on GH binding, phosphorylated on tyrosine residues in the cytoplasmic domain by JAK2. Post-translationally, ubiquitinated by the ECS(SOCS2) complex following ligand-binding and phosphorylation by JAK2, leading to its degradation by the proteasome. Regulation by the ECS(SOCS2) complex acts as a negative feedback loop of growth hormone receptor signaling. Ubiquitination is not sufficient for GHR internalization. Expressed in various tissues with high expression in liver and skeletal muscle. As to expression, isoform 2 is expressed in lung, stomach and muscle. In terms of tissue distribution, predominantly expressed in kidney, bladder, adrenal gland and brain stem. Highly expressed in placental villi.

It is found in the cell membrane. Its subcellular location is the secreted. Receptor for pituitary gland growth hormone (GH1) involved in regulating postnatal body growth. On ligand binding, couples to the JAK2/STAT5 pathway. Functionally, the soluble form (GHBP) acts as a reservoir of growth hormone in plasma and may be a modulator/inhibitor of GH signaling. Its function is as follows. Up-regulates the production of the soluble Growth hormone-binding protein form (GHBP) and acts as a negative inhibitor of growth hormone signaling. This Homo sapiens (Human) protein is Growth hormone receptor (GHR).